A 139-amino-acid chain; its full sequence is Putative lipoprotein LpqV (139 aa).

The signal sequence occupies residues methionine 1–glycine 25. Residue cysteine 26 is the site of N-palmitoyl cysteine attachment. The S-diacylglycerol cysteine moiety is linked to residue cysteine 26.

Its subcellular location is the cell membrane. The polypeptide is Putative lipoprotein LpqV (lpqV) (Mycobacterium bovis (strain ATCC BAA-935 / AF2122/97)).